The following is a 394-amino-acid chain: UDP-glucose 6-dehydrogenase (394 aa).

Residues 2–19 (KIAIAGSGYVGLSLAVLL), valine 11, aspartate 29, lysine 34, threonine 83, threonine 118, and glutamate 145 contribute to the NAD(+) site. Substrate is bound by residues 141-145 (EFLRE), lysine 203, asparagine 207, 248-252 (YNNPS), and glycine 256. Tyrosine 258 provides a ligand contact to NAD(+). Cysteine 259 functions as the Nucleophile in the catalytic mechanism. Residue lysine 262 coordinates NAD(+). Position 313 (lysine 313) interacts with substrate. Arginine 320 lines the NAD(+) pocket.

The protein belongs to the UDP-glucose/GDP-mannose dehydrogenase family.

The enzyme catalyses UDP-alpha-D-glucose + 2 NAD(+) + H2O = UDP-alpha-D-glucuronate + 2 NADH + 3 H(+). It participates in nucleotide-sugar biosynthesis; UDP-alpha-D-glucuronate biosynthesis; UDP-alpha-D-glucuronate from UDP-alpha-D-glucose: step 1/1. In terms of biological role, catalyzes the formation of UDP-glucuronic acid which is required for capsular hyaluronic acid synthesis. Directly responsible for the transformation of some unencapsulated serotype-3 SP mutants to the encapsulated phenotype. This is UDP-glucose 6-dehydrogenase (cap3A) from Streptococcus pneumoniae.